Here is a 971-residue protein sequence, read N- to C-terminus: Translation initiation factor IF-2 (971 aa).

Positions 48–63 (DHLRKSHGATDGDKRK) are enriched in basic and acidic residues. Disordered regions lie at residues 48 to 86 (DHLRKSHGATDGDKRKITLTRKHTSEIKQSDATGKARTI) and 100 to 381 (DDVA…STFQ). The segment covering 105–114 (GADQGQAQVA) has biased composition (low complexity). Residues 121 to 181 (ELKRREEEAR…EEEAATKRAA (61 aa)) are compositionally biased toward basic and acidic residues. The segment covering 182–202 (AEVAAAQQQAAAQQAAAEQEA) has biased composition (low complexity). A compositionally biased stretch (basic and acidic residues) spans 210–261 (DEARAAAERAAQREAAKKAEDAAREAADKARAEQEEISKRRAAAEAEARAIR). The segment covering 277 to 286 (PPKPVEPPKP) has biased composition (pro residues). Positions 304-326 (ARPAVKKPAGAAAPATTQAPAGA) are enriched in low complexity. Gly residues predominate over residues 356–369 (SSGGVDRGWRGGPK). Residues 471–640 (PRPPVVTVMG…LLQAEVLELK (170 aa)) form the tr-type G domain. The tract at residues 480–487 (GHVDHGKT) is G1. A GTP-binding site is contributed by 480–487 (GHVDHGKT). The G2 stretch occupies residues 505–509 (GITQH). The G3 stretch occupies residues 526–529 (DTPG). Residues 526–530 (DTPGH) and 580–583 (NKID) each bind GTP. The G4 stretch occupies residues 580–583 (NKID). The interval 616-618 (SAK) is G5.

The protein belongs to the TRAFAC class translation factor GTPase superfamily. Classic translation factor GTPase family. IF-2 subfamily.

The protein localises to the cytoplasm. Its function is as follows. One of the essential components for the initiation of protein synthesis. Protects formylmethionyl-tRNA from spontaneous hydrolysis and promotes its binding to the 30S ribosomal subunits. Also involved in the hydrolysis of GTP during the formation of the 70S ribosomal complex. The sequence is that of Translation initiation factor IF-2 from Burkholderia orbicola (strain AU 1054).